The sequence spans 487 residues: Serine/threonine-protein kinase 4 (487 aa).

Met-1 is subject to N-acetylmethionine. A Phosphothreonine modification is found at Thr-3. A Protein kinase domain is found at 30-281; the sequence is FDVLEKLGEG…ATQLLQHPFV (252 aa). ATP-binding positions include 36-44 and Lys-59; that span reads LGEGSYGSV. Asp-149 acts as the Proton acceptor in catalysis. Thr-183 is subject to Phosphothreonine; by autocatalysis. Phosphoserine is present on Ser-265. Positions 290–310 form a coiled coil; sequence LRDLINEAMDVKLKRQESQQR. A compositionally biased stretch (basic and acidic residues) spans 303–312; sequence KRQESQQREV. The segment at 303–332 is disordered; the sequence is KRQESQQREVDQDDEENSEEDEMDSGTMVR. The span at 313 to 326 shows a compositional bias: acidic residues; that stretch reads DQDDEENSEEDEMD. At Ser-320 the chain carries Phosphoserine. Phosphothreonine occurs at positions 340 and 367. A Phosphothreonine; by PKB/AKT1 modification is found at Thr-387. 2 positions are modified to phosphoserine: Ser-410 and Ser-414. The residue at position 433 (Tyr-433) is a Phosphotyrosine. Residues 433 to 480 enclose the SARAH domain; that stretch reads YEFLKSWTVEDLQKRLLALDPMMEQEIEEIRQKYQSKRQPILDAIEAK.

Belongs to the protein kinase superfamily. STE Ser/Thr protein kinase family. STE20 subfamily. Homodimer; mediated via the coiled-coil region. Interacts with NORE1, which inhibits autoactivation. Interacts with and stabilizes SAV1. Interacts with RASSF1. Interacts with FOXO3. Interacts with RASSF2 (via SARAH domain). Interacts with AR, PKB/AKT1, TNNI3 and SIRT1. Interacts with DLG5 (via PDZ domain 3). Interacts with MARK3 and SCRIB in the presence of DLG5. Mg(2+) serves as cofactor. Autophosphorylated on serine and threonine residues. Phosphorylation at Thr-387 by PKB/AKT1, leads to inhibition of its: kinase activity, nuclear translocation and autophosphorylation at Thr-183. It also diminishes its cleavage by caspases and its ability to phosphorylate FOXO3. Post-translationally, proteolytically cleaved by caspase-3 during apoptosis at Asp-326 and Asp-349 resulting in a 37 kDa or a 39 kDa subunit respectively. The 39 kDa subunit is further cleaved into the 37 kDa form. Proteolytic cleavage results in kinase activation and nuclear translocation of the truncated form (MST1/N). It is less likely that cleavage at Asp-349 is a prerequisite for activation as this site is not conserved in the murine ortholog.

The protein resides in the cytoplasm. It localises to the nucleus. It catalyses the reaction L-seryl-[protein] + ATP = O-phospho-L-seryl-[protein] + ADP + H(+). It carries out the reaction L-threonyl-[protein] + ATP = O-phospho-L-threonyl-[protein] + ADP + H(+). With respect to regulation, inhibited by the C-terminal non-catalytic region. Activated by caspase-cleavage. Full activation also requires homodimerization and autophosphorylation of Thr-183. Activated by RASSF1 which acts by preventing its dephosphorylation. Functionally, stress-activated, pro-apoptotic kinase which, following caspase-cleavage, enters the nucleus and induces chromatin condensation followed by internucleosomal DNA fragmentation. Key component of the Hippo signaling pathway which plays a pivotal role in organ size control and tumor suppression by restricting proliferation and promoting apoptosis. The core of this pathway is composed of a kinase cascade wherein STK3/MST2 and STK4/MST1, in complex with its regulatory protein SAV1, phosphorylates and activates LATS1/2 in complex with its regulatory protein MOB1, which in turn phosphorylates and inactivates YAP1 oncoprotein and WWTR1/TAZ. Phosphorylation of YAP1 by LATS2 inhibits its translocation into the nucleus to regulate cellular genes important for cell proliferation, cell death, and cell migration. STK3/MST2 and STK4/MST1 are required to repress proliferation of mature hepatocytes, to prevent activation of facultative adult liver stem cells (oval cells), and to inhibit tumor formation. Phosphorylates 'Ser-14' of histone H2B (H2BS14ph) during apoptosis. Phosphorylates FOXO3 upon oxidative stress, which results in its nuclear translocation and cell death initiation. Phosphorylates MOBKL1A, MOBKL1B and RASSF2. Phosphorylates TNNI3 (cardiac Tn-I) and alters its binding affinity to TNNC1 (cardiac Tn-C) and TNNT2 (cardiac Tn-T). Phosphorylates FOXO1 on 'Ser-212' and regulates its activation and stimulates transcription of PMAIP1 in a FOXO1-dependent manner. Phosphorylates SIRT1 and inhibits SIRT1-mediated p53/TP53 deacetylation, thereby promoting p53/TP53 dependent transcription and apoptosis upon DNA damage. Acts as an inhibitor of PKB/AKT1. Phosphorylates AR on 'Ser-650' and suppresses its activity by intersecting with PKB/AKT1 signaling and antagonizing formation of AR-chromatin complexes. The protein is Serine/threonine-protein kinase 4 (STK4) of Chlorocebus aethiops (Green monkey).